The sequence spans 632 residues: 2-hydroxyacyl-CoA lyase 2 (632 aa).

The helical transmembrane segment at A10 to L30 threads the bilayer. E98 provides a ligand contact to thiamine diphosphate. A thiamine pyrophosphate binding region spans residues D470–G550. Positions 521 and 547 each coordinate Mg(2+).

This sequence belongs to the TPP enzyme family. It depends on Mg(2+) as a cofactor. Thiamine diphosphate is required as a cofactor.

Its subcellular location is the endoplasmic reticulum membrane. It carries out the reaction 2-hydroxyoctadecanoyl-CoA = heptadecanal + formyl-CoA. The enzyme catalyses (2R)-hydroxyhexadecanoyl-CoA = pentadecanal + formyl-CoA. Endoplasmic reticulum 2-OH acyl-CoA lyase involved in the cleavage (C1 removal) reaction in the fatty acid alpha-oxydation in a thiamine pyrophosphate (TPP)-dependent manner. Involved in the phytosphingosine degradation pathway. In Bos taurus (Bovine), this protein is 2-hydroxyacyl-CoA lyase 2 (ILVBL).